Reading from the N-terminus, the 116-residue chain is Small ribosomal subunit protein bS6 (116 aa).

Residues 94–116 form a disordered region; the sequence is ESITEPSPLTKPKEDRKGDSEAA. Over residues 104–116 the composition is skewed to basic and acidic residues; the sequence is KPKEDRKGDSEAA.

It belongs to the bacterial ribosomal protein bS6 family.

Functionally, binds together with bS18 to 16S ribosomal RNA. The polypeptide is Small ribosomal subunit protein bS6 (Idiomarina loihiensis (strain ATCC BAA-735 / DSM 15497 / L2-TR)).